The sequence spans 461 residues: MTLFVVINIIVMLGLMALLYMMQKKHVSFSKRVFTALGIGIVFGFALHFIYGSSSETITQTSDWFNIAGGGYVKLLQMIVMPLVFISILGAFTKLKLTHNIGKISGLIIGLLIATTAVAAAVGIASALAFDLQAVHVDQGQAETMRGAELEQKSQDMEAKTLPQQIVELLPGNPFLDFTGARPTSTIAVVIFAAFLGIAYLGVNRKQPEQAELFKKMVDAVYAIIMRVVTLILRLTPYGVLAIMTKTIATSDLDSIAKLGKFVIASYAALIVMFIIHLLLITFSGLNPVTYLKKAFPVLVFAFTSRSSAGALPLNIKTQRSLGVPEGIANFAGSFGLSIGQNGCAGIYPAMLAIMIAPTVGQNPLDPSFLFTVIAVVAISSFGVAGVGGGATFAALLVLSALNMPVALAGLLISVEPLIDMGRTALNVSGSMTSGLVTSKVTNELEKDTYQDRTNIIEAEV.

10 consecutive transmembrane segments (helical) span residues 1–21, 33–53, 72–92, 104–124, 183–203, 224–244, 262–282, 337–357, 369–389, and 393–413; these read MTLF…LLYM, VFTA…IYGS, YVKL…LGAF, ISGL…AVGI, PTST…YLGV, IIMR…LAIM, FVIA…LLIT, LSIG…IMIA, FLFT…GVGG, and FAAL…GLLI.

The protein belongs to the dicarboxylate/amino acid:cation symporter (DAACS) (TC 2.A.23) family.

The protein resides in the membrane. Mediates uptake of L-cystine, the oxidized form of L-cysteine. In Bacillus licheniformis (strain ATCC 14580 / DSM 13 / JCM 2505 / CCUG 7422 / NBRC 12200 / NCIMB 9375 / NCTC 10341 / NRRL NRS-1264 / Gibson 46), this protein is L-cystine uptake protein TcyP (tcyP).